The chain runs to 151 residues: Protein INO4 (151 aa).

Positions 45–97 (QIRINHVSSEKKRRELERAIFDELVAVVPDLQPQESRSELIIYLKSLSYLSWL) constitute a bHLH domain. The interval 112 to 137 (HEAKTGSSSSSDPVQEQNGNIRDLVP) is disordered. Polar residues predominate over residues 116 to 131 (TGSSSSSDPVQEQNGN).

As to quaternary structure, efficient DNA binding requires dimerization with another bHLH protein.

It is found in the nucleus. Its function is as follows. Transcriptional activator of phospholipid synthetic genes (such as INO1, CHO1/PSS, CHO2/PEM1, OPI3/PEM2, etc.). This chain is Protein INO4 (INO4), found in Saccharomyces cerevisiae (strain ATCC 204508 / S288c) (Baker's yeast).